A 423-amino-acid polypeptide reads, in one-letter code: Immunity-related GTPase family M protein 3 (423 aa).

In terms of domain architecture, IRG-type G spans 83 to 260 (YRVKIAVTGD…PELRNTLQKD (178 aa)). Residues 92–99 (DSGNGMSS), 117–121 (TGVVR), and 200–202 (KLD) contribute to the GTP site.

The protein belongs to the TRAFAC class dynamin-like GTPase superfamily. IRG family.

It localises to the endoplasmic reticulum. The protein resides in the cytoplasmic vesicle membrane. It is found in the lipid droplet. The enzyme catalyses GTP + H2O = GDP + phosphate + H(+). Functionally, immunity-related GTPase that plays important roles in host resistance to acute infection by protozoan, such as Toxoplasma gondii and Leishmania major. Acts as a dynamin-like protein that binds to intracellular membranes and promotes remodeling and trafficking of those membranes. Acts predominantly to restrict acute protozoan infection: expression is required in both hematopoietic and non-hematopoietic cellular compartments and is dependent on Stat1. Only plays a partial role in the control of latent Toxoplasma infection. Involved in the clearance of acute protozoan infections by regulating autophagy, possibly by promoting the fusion of phagosomes with lysosomes for efficient degradation of vacuoles containing parasites. Probably involved in membrane disruption of parasite-containing vacuoles. In addition to its role in resistance to acute infection by protozoan, also acts as a negative regulator of the integrated stress response (ISR) following coxsackievirus B3 infection. Promotes differentiation of activated CD8(+) T-cells. This Mus musculus (Mouse) protein is Immunity-related GTPase family M protein 3.